The sequence spans 451 residues: Type 3 secretion system ATPase (451 aa).

Position 184-189 (184-189 (GGGKST)) interacts with ATP.

Belongs to the ATPase alpha/beta chains family. T3SS ATPase subfamily. As to quaternary structure, the core secretion machinery of the T3SS is composed of approximately 20 different proteins, including cytoplasmic components, a base, an export apparatus and a needle. This subunit is part of the cytosolic complex. Forms homohexamers.

It localises to the cytoplasm. It carries out the reaction ATP + H2O + cellular proteinSide 1 = ADP + phosphate + cellular proteinSide 2.. ATPase component of the type III secretion system (T3SS), also called injectisome, which is used to inject bacterial effector proteins into eukaryotic host cells. Acts as a molecular motor to provide the energy that is required for the export of proteins. Required for type III secretion apparatus (T3SA) formation, proper protein secretion, host cell invasion and virulence. May play a critical role in T3SS substrate recognition, disassembly of the effector/chaperone complex and unfolding of the effector in an ATP-dependent manner prior to secretion. The protein is Type 3 secretion system ATPase of Sinorhizobium fredii (strain NBRC 101917 / NGR234).